The sequence spans 369 residues: Type 2 DNA topoisomerase 6 subunit A (369 aa).

One can recognise a Topo IIA-type catalytic domain in the interval 10–146; that stretch reads KPREIAKQKI…LGFIPEEDGS (137 aa). The O-(5'-phospho-DNA)-tyrosine intermediate role is filled by Tyr103. The Mg(2+) site is built by Glu197 and Asp249.

This sequence belongs to the TOP6A family. Homodimer. Heterotetramer of two Top6A and two Top6B chains. The cofactor is Mg(2+).

The enzyme catalyses ATP-dependent breakage, passage and rejoining of double-stranded DNA.. Relaxes both positive and negative superturns and exhibits a strong decatenase activity. This chain is Type 2 DNA topoisomerase 6 subunit A, found in Methanocaldococcus jannaschii (strain ATCC 43067 / DSM 2661 / JAL-1 / JCM 10045 / NBRC 100440) (Methanococcus jannaschii).